A 502-amino-acid polypeptide reads, in one-letter code: MAILVSLLFLAIALTFFLLKLNEKREKKPNLPPSPPNLPIIGNLHQLGNLPHRSLRSLANELGPLILLHLGHIPTLIVSTAEIAEEILKTHDLIFASRPSTTAARRIFYDCTDVAFSPYGEYWRQVRKICVLELLSIKRVNSYRSIREEEVGLMMERISQSCSTGEAVNLSELLLLLSSGTITRVAFGKKYEGEEERKNKFADLATELTTLMGAFFVGDYFPSFAWVDVLTGMDARLKRNHGELDAFVDHVIDDHLLSRKANGSDGVEQKDLVDVLLHLQKDSSLGVHLNRNNLKAVILDMFSGGTDTTAVTLEWAMAELIKHPDVMEKAQQEVRRVVGKKAKVEEEDLHQLHYLKLIIKETLRLHPVAPLLVPRESTRDVVIRGYHIPAKTRVFINAWAIGRDPKSWENAEEFLPERFVNNSVDFKGQDFQLIPFGAGRRGCPGIAFGISSVEISLANLLYWFNWELPGDLTKEDLDMSEAVGITVHMKFPLQLVAKRHLS.

A helical transmembrane segment spans residues 7–21; it reads LLFLAIALTFFLLKL. Cys-443 is a heme binding site.

The protein belongs to the cytochrome P450 family. It depends on heme as a cofactor. As to expression, mesocarp.

The protein resides in the microsome membrane. The protein localises to the endoplasmic reticulum membrane. Functionally, involved in the metabolism of compounds associated with the development of flavor in the ripening fruit process, possibly by acting as trans-cinnamic acid 4-hydrolase. The protein is Cytochrome P450 71A1 (CYP71A1) of Persea americana (Avocado).